We begin with the raw amino-acid sequence, 198 residues long: Rac-like GTP-binding protein ARAC3 (198 aa).

Residues 13–21, 31–38, 60–64, and 118–121 contribute to the GTP site; these read GDGAVGKTC, FPTDYVPT, DTAGQ, and TKLD. Residues 35–43 carry the Effector region motif; sequence YVPTVFDNF. A lipid anchor (S-palmitoyl cysteine) is attached at cysteine 158. Cysteine 195 carries the cysteine methyl ester modification. Cysteine 195 is lipidated: S-geranylgeranyl cysteine. Residues 196 to 198 constitute a propeptide, removed in mature form; sequence SIL.

Belongs to the small GTPase superfamily. Rho family. As to quaternary structure, interacts with Rho GDP-dissociation inhibitor 1 and ICR1. Binds to SPK1 when in the inactive GDP-bound form. Ubiquitous. Preferentially expressed at the tip of root hairs.

Its subcellular location is the cytoplasm. The protein resides in the cell membrane. Functionally, inactive GDP-bound Rho GTPases reside in the cytosol, are found in a complex with Rho GDP-dissociation inhibitors (Rho GDIs), and are released from the GDI protein in order to translocate to membranes upon activation. Involved in cell polarity control during the actin-dependent tip growth of root hairs, thus regulating root hair length and root hair initiation. Contributes, in a SPK1-dependent manner, to the prevention of cortical microtubules organization into parallel arrays oriented perpendicular to the axis of cell elongation to limit anisotropic cell growth during petal development. SPK1-dependent activation is required for auxin-mediated inhibition of PIN2 internalization during gravitropic responses. This is Rac-like GTP-binding protein ARAC3 from Arabidopsis thaliana (Mouse-ear cress).